The sequence spans 344 residues: Phenylalanine--tRNA ligase alpha subunit (344 aa).

Glu256 is a binding site for Mg(2+).

This sequence belongs to the class-II aminoacyl-tRNA synthetase family. Phe-tRNA synthetase alpha subunit type 1 subfamily. In terms of assembly, tetramer of two alpha and two beta subunits. Mg(2+) serves as cofactor.

It localises to the cytoplasm. The enzyme catalyses tRNA(Phe) + L-phenylalanine + ATP = L-phenylalanyl-tRNA(Phe) + AMP + diphosphate + H(+). The chain is Phenylalanine--tRNA ligase alpha subunit from Bacillus licheniformis (strain ATCC 14580 / DSM 13 / JCM 2505 / CCUG 7422 / NBRC 12200 / NCIMB 9375 / NCTC 10341 / NRRL NRS-1264 / Gibson 46).